The primary structure comprises 639 residues: E3 ubiquitin-protein ligase HEL2 (639 aa).

The segment at 1 to 55 is disordered; that stretch reads MSESVKENVTPTRNFRRTQGPQNNTKPHNDRKNFRRKQKKNNLSAEPNLTTSSAD. N-acetylserine is present on serine 2. Polar residues-rich tracts occupy residues 7–26 and 43–54; these read ENVT…NNTK and LSAEPNLTTSSA. Threonine 57 is modified (phosphothreonine). The RING-type zinc finger occupies 64 to 104; that stretch reads CVICARKLTYVSLTPCHHKTCHICGFRQRALYNKKSCLICR. The 71-residue stretch at 222-292 folds into the LIM zinc-binding domain; it reads PMCAFCSGKR…QTCLDNKFVV (71 aa). A compositionally biased stretch (low complexity) spans 343 to 354; that stretch reads SISSLPGSSSGS. Disordered stretches follow at residues 343 to 367 and 550 to 631; these read SISS…PEES and LESK…GKQK. Serine 354 is subject to Phosphoserine.

This sequence belongs to the ZNF598/HEL2 family. As to quaternary structure, interacts with the E2 ubiquitin-conjugating enzyme UBC4. Interacts with histones H3 and H4.

The protein localises to the cytoplasm. It carries out the reaction S-ubiquitinyl-[E2 ubiquitin-conjugating enzyme]-L-cysteine + [acceptor protein]-L-lysine = [E2 ubiquitin-conjugating enzyme]-L-cysteine + N(6)-ubiquitinyl-[acceptor protein]-L-lysine.. The protein operates within protein modification; protein ubiquitination. Functionally, E3 ubiquitin-protein ligase that plays a key role in the ribosome quality control (RQC), a pathway that takes place when a ribosome has stalled during translation, leading to degradation of nascent peptide chains. HEL2 is activated when ribosomes are stalled within an mRNA following translation of prematurely polyadenylated mRNAs. Acts as a ribosome collision sensor: specifically recognizes and binds collided ribosome and ubiquitinates the 40S ribosomal proteins RPS20/uS10 and RPS3/uS3. Catalyzes 'Lys-63'-linked polyubiquitination of RPS20/uS10, promoting recruitment of the RQT (ribosome quality control trigger) complex, which drives the disassembly of stalled ribosomes, followed by degradation of nascent peptides. HEL2 also acts as an activator of the No-Go decay (NGD) pathway by mediating polyubiquitination of monoubiquitinated RPS3/uS3 and RPS7/es7: RPS3/uS3 and RPS7/es7 are first monoubiquitinated by MAG2 and MOT2/NOT4, respectively, and HEL2 mediates formation of 'Lys-63'-linked polyubiquitin chains on monoubiquitin, leading to activation of the NGD pathway in a CUE2-mediated endonucleolytic cleavage. Polyubiquitination of RPS3/uS3 also triggers degradation of non-functional 18S rRNA. The RQC pathway and the integrated stress response (ISR) antagonize each other: HEL2 prevents the activation of GCN2, while GCN2 suppresses RQC activation. The RQC pathway functions as a preventive quality control in the secretory pathway: HEL2 binds preferentially to the pre-engaged secretory ribosome-nascent chain complexes and prevents mistargeting of secretory proteins into mitochondria. Independently of its role in RQC, also involved in the polyubiquitination and proteasomal-degradation of excess histone proteins. This is E3 ubiquitin-protein ligase HEL2 from Saccharomyces cerevisiae (strain ATCC 204508 / S288c) (Baker's yeast).